A 306-amino-acid polypeptide reads, in one-letter code: tRNA dimethylallyltransferase (306 aa).

Residue Gly-9–Thr-16 coordinates ATP. Thr-11–Thr-16 is a binding site for substrate. The tract at residues Asp-34–Gln-37 is interaction with substrate tRNA.

The protein belongs to the IPP transferase family. In terms of assembly, monomer. Mg(2+) serves as cofactor.

It catalyses the reaction adenosine(37) in tRNA + dimethylallyl diphosphate = N(6)-dimethylallyladenosine(37) in tRNA + diphosphate. Its function is as follows. Catalyzes the transfer of a dimethylallyl group onto the adenine at position 37 in tRNAs that read codons beginning with uridine, leading to the formation of N6-(dimethylallyl)adenosine (i(6)A). In Lactobacillus acidophilus (strain ATCC 700396 / NCK56 / N2 / NCFM), this protein is tRNA dimethylallyltransferase.